Consider the following 146-residue polypeptide: Angiogenin (146 aa).

An N-terminal signal peptide occupies residues M1 to A24. Q25 is modified (pyrrolidone carboxylic acid). H37 (proton acceptor) is an active-site residue. 3 cysteine pairs are disulfide-bonded: C50–C105, C63–C116, and C81–C131. A Nucleolar localization signal motif is present at residues R55 to M59. Position 105 (C105) interacts with tRNA. H138 functions as the Proton donor in the catalytic mechanism.

This sequence belongs to the pancreatic ribonuclease family. Homodimer. Interacts with RNH1; inhibiting ANG ribonuclease activity. Interacts with PCNA.

The protein localises to the secreted. It is found in the nucleus. The protein resides in the nucleolus. It localises to the cytoplasm. Its subcellular location is the stress granule. Has weak tRNA ribonuclease activity by itself due to partial autoinhibition by its C-terminus, which folds into a short alpha-helix that partially occludes the substrate-binding site. In absence of stress, the ribonuclease activity is inhibited by RNH1 in the cytoplasm. In response to stress, dissociates from RNH1 in the cytoplasm and associates with cytoplasmic ribosomes with vacant A-sites: ribosomes directly activate the tRNA ribonuclease activity of ANG by refolding the C-terminal alpha-helix. In response to stress, the angiogenic activity of ANG is inhibited by RNH1 in the nucleus. Functionally, secreted ribonuclease that can either promote or restrict cell proliferation of target cells, depending on the context. Endocytosed in target cells via its receptor PLXNB2 and translocates to the cytoplasm or nucleus. Under stress conditions, localizes to the cytoplasm and promotes the assembly of stress granules (SGs): specifically cleaves a subset of tRNAs within anticodon loops to produce tRNA-derived stress-induced fragments (tiRNAs), resulting in translation repression and inhibition of cell proliferation. tiRNas also prevent formation of apoptosome, thereby promoting cell survival. Preferentially cleaves RNAs between a pyrimidine and an adenosine residue, suggesting that it cleaves the anticodon loop of tRNA(Ala) (32-UUAGCAU-38) after positions 33 and 36. Cleaves a subset of tRNAs, including tRNA(Ala), tRNA(Glu), tRNA(Gly), tRNA(Lys), tRNA(Val), tRNA(His), tRNA(Asp) and tRNA(Sec). Under growth conditions and in differentiated cells, translocates to the nucleus and stimulates ribosomal RNA (rRNA) transcription, including that containing the initiation site sequences of 45S rRNA, thereby promoting cell growth and proliferation. Angiogenin induces vascularization of normal and malignant tissues via its ability to promote rRNA transcription. Involved in hematopoietic stem and progenitor cell (HSPC) growth and survival by promoting rRNA transcription in growth conditions and inhibiting translation in response to stress, respectively. Mediates the crosstalk between myeloid and intestinal epithelial cells to protect the intestinal epithelial barrier integrity: secreted by myeloid cells and promotes intestinal epithelial cells proliferation and survival. Also mediates osteoclast-endothelial cell crosstalk in growing bone: produced by osteoclasts and protects the neighboring vascular cells against senescence by promoting rRNA transcription. This chain is Angiogenin (ANG), found in Aotus trivirgatus (Three-striped night monkey).